The following is a 261-amino-acid chain: Carbonic anhydrase 1 (261 aa).

The tract at residues Met-1–Lys-40 is disordered. Ala-2 carries the N-acetylalanine modification. An Alpha-carbonic anhydrase domain is found at Pro-4–Phe-261. His-65 serves as the catalytic Proton donor/acceptor. 3 residues coordinate Zn(2+): His-95, His-97, and His-120. Substrate-binding positions include Thr-200 and Thr-200–His-201. Residues Pro-241–Phe-261 form a disordered region.

Belongs to the alpha-carbonic anhydrase family. Zn(2+) serves as cofactor.

Its subcellular location is the cytoplasm. It catalyses the reaction hydrogencarbonate + H(+) = CO2 + H2O. The enzyme catalyses urea = cyanamide + H2O. With respect to regulation, inhibited by acetazolamide. Catalyzes the reversible hydration of carbon dioxide. Can hydrate cyanamide to urea. This chain is Carbonic anhydrase 1 (CA1), found in Pan troglodytes (Chimpanzee).